A 683-amino-acid polypeptide reads, in one-letter code: Eukaryotic translation initiation factor 3 subunit B (683 aa).

The disordered stretch occupies residues M1 to D25. Positions Q9 to D25 are enriched in acidic residues. The RRM domain maps to N49–D133. WD repeat units follow at residues K199–K238, A240–T279, D283–M321, I324–A359, E435–L477, and G522–N567. A coiled-coil region spans residues M611–K638.

Belongs to the eIF-3 subunit B family. As to quaternary structure, component of the eukaryotic translation initiation factor 3 (eIF-3) complex.

The protein resides in the cytoplasm. Its function is as follows. RNA-binding component of the eukaryotic translation initiation factor 3 (eIF-3) complex, which is involved in protein synthesis of a specialized repertoire of mRNAs and, together with other initiation factors, stimulates binding of mRNA and methionyl-tRNAi to the 40S ribosome. The eIF-3 complex specifically targets and initiates translation of a subset of mRNAs involved in cell proliferation. The chain is Eukaryotic translation initiation factor 3 subunit B from Anopheles gambiae (African malaria mosquito).